A 212-amino-acid polypeptide reads, in one-letter code: Holliday junction branch migration complex subunit RuvA (212 aa).

The interval 1–66 (MISGLKGTLK…ERGQKLFGFL (66 aa)) is domain I. Residues 67 to 145 (TEQDKEFFKV…KLELFLSGTS (79 aa)) are domain II. The flexible linker stretch occupies residues 146–162 (KEPSISLSSFSETPEEA). Residues 163–212 (ALSRKREIAILGLVQLGFEEKTASKEVDKILKSSSPTDPGEIIREILKSL) are domain III.

The protein belongs to the RuvA family. As to quaternary structure, homotetramer. Forms an RuvA(8)-RuvB(12)-Holliday junction (HJ) complex. HJ DNA is sandwiched between 2 RuvA tetramers; dsDNA enters through RuvA and exits via RuvB. An RuvB hexamer assembles on each DNA strand where it exits the tetramer. Each RuvB hexamer is contacted by two RuvA subunits (via domain III) on 2 adjacent RuvB subunits; this complex drives branch migration. In the full resolvosome a probable DNA-RuvA(4)-RuvB(12)-RuvC(2) complex forms which resolves the HJ.

It is found in the cytoplasm. The RuvA-RuvB-RuvC complex processes Holliday junction (HJ) DNA during genetic recombination and DNA repair, while the RuvA-RuvB complex plays an important role in the rescue of blocked DNA replication forks via replication fork reversal (RFR). RuvA specifically binds to HJ cruciform DNA, conferring on it an open structure. The RuvB hexamer acts as an ATP-dependent pump, pulling dsDNA into and through the RuvAB complex. HJ branch migration allows RuvC to scan DNA until it finds its consensus sequence, where it cleaves and resolves the cruciform DNA. The protein is Holliday junction branch migration complex subunit RuvA of Leptospira borgpetersenii serovar Hardjo-bovis (strain JB197).